A 284-amino-acid polypeptide reads, in one-letter code: Nucleoid occlusion protein (284 aa).

A DNA-binding region (H-T-H motif) is located at residues E143–L162.

Belongs to the ParB family.

The protein localises to the cytoplasm. The protein resides in the nucleoid. In terms of biological role, effects nucleoid occlusion by binding relatively nonspecifically to DNA and preventing the assembly of the division machinery in the vicinity of the nucleoid, especially under conditions that disturb the cell cycle. It helps to coordinate cell division and chromosome segregation by preventing the formation of the Z ring through the nucleoid, which would cause chromosome breakage. The chain is Nucleoid occlusion protein from Listeria monocytogenes serovar 1/2a (strain ATCC BAA-679 / EGD-e).